The chain runs to 369 residues: Methionine aminopeptidase 1B, chloroplastic (369 aa).

The transit peptide at 1-61 (MASSVFLSSF…YSPRQFHVSA (61 aa)) directs the protein to the chloroplast. H199 is a substrate binding site. Residues D216, D227, and H290 each coordinate a divalent metal cation. H297 is a substrate binding site. A divalent metal cation-binding residues include E322 and E353.

This sequence belongs to the peptidase M24A family. Methionine aminopeptidase type 1 subfamily. Co(2+) serves as cofactor. It depends on Zn(2+) as a cofactor. Requires Mn(2+) as cofactor. The cofactor is Fe(2+). Ubiquitous. Preferentially expressed in green tissues.

It localises to the plastid. It is found in the chloroplast. The enzyme catalyses Release of N-terminal amino acids, preferentially methionine, from peptides and arylamides.. In terms of biological role, removes the N-terminal methionine from nascent proteins. The N-terminal methionine is often cleaved when the second residue in the primary sequence is small and uncharged (Met-Ala-, Cys, Gly, Pro, Ser, Thr, or Val). This is Methionine aminopeptidase 1B, chloroplastic (MAP1B) from Arabidopsis thaliana (Mouse-ear cress).